The primary structure comprises 263 residues: Peptidoglycan-N-acetylmuramic acid deacetylase PdaA (263 aa).

An N-terminal signal peptide occupies residues 1-23 (MKWMCSICCAAVLLAGGAAQAEA). The NodB homology domain occupies 66-247 (KTIYLTFDNG…DLKKQGYTFK (182 aa)). Asp73 serves as the catalytic Proton acceptor. His124 and His128 together coordinate a divalent metal cation. Residue His222 is the Proton donor of the active site.

It belongs to the polysaccharide deacetylase family.

Catalyzes the deacetylation of N-acetylmuramic acid (MurNAc) residues in glycan strands of peptidoglycan, leading to the formation of muramic delta-lactam residues in spore cortex, after transpeptidation of deacetylated muramic acid residues. PdaA probably carries out both deacetylation and lactam ring formation and requires the product of CwlD activity on peptidoglycan as a substrate. Is required for germination. Cannot use chitin oligomer (hexa-N-acetylchitohexaose) as a substrate. The sequence is that of Peptidoglycan-N-acetylmuramic acid deacetylase PdaA (pdaA) from Bacillus subtilis (strain 168).